Consider the following 493-residue polypeptide: MLQGVIDTHQASLRGILATGALVIFVALFLATFQFQVLCLPLINGRKRFELSLTNSKKRYYADAKGFIQSGFSQSKNGFYAITENGRELILAPKFADDIRNDKRFNFHTYREHTMLPNVAGLDLFQLNDLGKKILSHVIGYRLTHNLEWHEVPLRNSLLAVISQQSSRVFLGKKFCRDPTWLKINTDITVLAFRAVQELRVYPNLLRPVVGWFLPACRVLRSEVRKARKIVEPIVQKRRDYKAACLREQTNPEQFLDTIEWAEECAGSQAYDPTVTQLTIALSAMHNTSDFLTQLVFDLCERPNLIEDLRQEIISVRKKHPWGKATIHHLKLMDSVMKESQRLKPIGLVNMRRRAENSVELADGLIIRKGDLLMISSANQWNPAIYPDPDQFDGYRFYNMRQTPDKKNLSHFVSTNVNHIGFGHGRHACPGRFFAAAETKVALCHILLKYDFKLVGEAPPKILAIGSITSANPFAKIAIRRREEEVSLGVSEP.

Residues 15-35 (GILATGALVIFVALFLATFQF) traverse the membrane as a helical segment. C429 serves as a coordination point for heme.

This sequence belongs to the cytochrome P450 family. The cofactor is heme.

The protein resides in the membrane. Its pathway is secondary metabolite biosynthesis; terpenoid biosynthesis. In terms of biological role, cytochrome P450 monooxygenase; part of the gene cluster that mediates the biosynthesis of 15-deoxyoxalicine B. The first step of the pathway is the synthesis of nicotinyl-CoA from nicotinic acid by the nicotinic acid-CoA ligase olcI. Nicotinyl-CoA is then a substrate of polyketide synthase olcA to produce 4-hydroxy-6-(3-pyridinyl)-2H-pyran-2-one (HPPO) which is further prenylated by the polyprenyl transferase olcH to yield geranylgeranyl-HPPO. Geranylgeranyl pyrophosphate is provided by the cluster-specific geranylgeranyl pyrophosphate synthase olcC. The FAD-dependent monooxygenase olcE catalyzes the epoxidation of geranylgeranyl-HPPO and the terpene cyclase olcD catalyzes the cyclization of the terpenoid component, resulting in the formation of the tricyclic terpene moiety seen in predecaturin E. The cytochrome P450 monooxygenase then catalyzes the allylic oxidation of predecaturin E, which is followed by spirocylization with concomitant loss of one molecule of water to form decaturin E. Decaturin E is the substrate of the cytochrome P450 monooxygenase olcJ which hydroxylates it at the C-29 position to form decaturin F. The short-chain dehydrogenase/reductase olcF may catalyze the oxidation of decaturin F to generate the 29-hydroxyl-27-one intermediate, and subsequent hemiacetal formation probably leads to the formation of decaturin C. The dioxygenase olcK may be a peroxisomal enzyme that catalyzes the hydroxylation of decaturin C into decaturin A once decaturin C is shuttled into the peroxisome by the MFS transporter olcL. Finally the cytochrome P450 monooxygenase olcB catalyzes the oxidative rearrangement to yield 15-deoxyoxalicine B. In the absence of olcJ, decaturin E may be shunted to a pathway in which it is oxidized to a ketone, possibly by olcF, to form decaturin D, which undergoes further allylic oxidation to yield decaturin G. Moreover, in the absence of oclK or oclL, oclB can convert decaturin C into 15-deoxyoxalicine A. The polypeptide is Cytochrome P450 monooxygenase olcG (Penicillium canescens).